The sequence spans 363 residues: Aminomethyltransferase (363 aa).

It belongs to the GcvT family. As to quaternary structure, the glycine cleavage system is composed of four proteins: P, T, L and H.

The catalysed reaction is N(6)-[(R)-S(8)-aminomethyldihydrolipoyl]-L-lysyl-[protein] + (6S)-5,6,7,8-tetrahydrofolate = N(6)-[(R)-dihydrolipoyl]-L-lysyl-[protein] + (6R)-5,10-methylene-5,6,7,8-tetrahydrofolate + NH4(+). The glycine cleavage system catalyzes the degradation of glycine. In Dechloromonas aromatica (strain RCB), this protein is Aminomethyltransferase.